The chain runs to 768 residues: Levansucrase (768 aa).

Positions 1–36 are cleaved as a signal peptide; the sequence is MLENKKHKKMSLSGKSLLMGTLSTAAIVLSASTVNA. 4 stretches are compositionally biased toward polar residues: residues 57 to 68, 80 to 99, 106 to 134, and 143 to 153; these read SASVNKNDNSGL, TETN…SQVN, SSTQ…QDSD, and NNSQGQSSTSS. A disordered region spans residues 57-158; that stretch reads SASVNKNDNS…SSTSSEKTEL (102 aa). Residues Trp-250, Asp-251, and Ser-320 each coordinate sucrose. The Nucleophile role is filled by Asp-251. Residue Asp-398 coordinates Ca(2+). Arg-403 and Asp-404 together coordinate sucrose. Positions 429, 468, and 502 each coordinate Ca(2+). Glu-503 serves as a coordination point for sucrose. Glu-505 functions as the Proton donor/acceptor in the catalytic mechanism. A sucrose-binding site is contributed by Arg-523. Positions 688–736 are disordered; it reads HQPVTPNVPTTPEKPENPTTPNTPDTPRTPEVPTTPVKKTTQSELPKAG. A compositionally biased stretch (low complexity) spans 691–727; sequence VTPNVPTTPEKPENPTTPNTPDTPRTPEVPTTPVKKT. The short motif at 732–736 is the LPXTG sorting signal element; that stretch reads LPKAG. Pentaglycyl murein peptidoglycan amidated alanine is present on Ala-735. Residues 736–768 constitute a propeptide, removed by sortase; it reads GAKDGIAATILGAISSMLGVIGLAGISKRKRNN.

This sequence belongs to the glycosyl hydrolase 68 family.

The protein localises to the secreted. It is found in the cell wall. Its subcellular location is the cell surface. It carries out the reaction [6)-beta-D-fructofuranosyl-(2-&gt;](n) alpha-D-glucopyranoside + sucrose = [6)-beta-D-fructofuranosyl-(2-&gt;](n+1) alpha-D-glucopyranoside + D-glucose. With respect to regulation, calcium ions are required for optimal activity, but do not seem to be essential since addition of EDTA causes only a 48% drop in activity. Ca(2+) may play an important structural role and promote stability of levansucrase. In terms of biological role, fructosyltransferase that catalyzes the polymerization of the fructose moiety of sucrose to produce levan polymer and the fructo-oligosaccharide (FOS) 1-kestose. Is also able to convert raffinose into a fructan polymer and a single oligosaccharide (most likely Gal-Glc-Frc-Frc) in vitro; however, L.gasseri strain DSM 20077 is unable to ferment raffinose. Also displays sucrose hydrolase activity. The sequence is that of Levansucrase from Lactobacillus gasseri.